Consider the following 657-residue polypeptide: N-acetylgalactosaminyltransferase 7 (657 aa).

Residues 1 to 6 are Cytoplasmic-facing; that stretch reads MRLKIG. Residues 7-29 form a helical; Signal-anchor for type II membrane protein membrane-spanning segment; that stretch reads FILRSLLVVGSFLGLVVLWSSLS. The segment at 30–66 is disordered; sequence SRPDDPSPLSRMREDRDVNNPLPNRGGNGLAPGDDRF. Residues 30–657 lie on the Lumenal side of the membrane; it reads SRPDDPSPLS…KWEMNNIHSV (628 aa). 5 cysteine pairs are disulfide-bonded: Cys197/Cys435, Cys426/Cys507, Cys545/Cys562, Cys585/Cys600, and Cys625/Cys640. The catalytic subdomain A stretch occupies residues 206 to 317; it reads LLTSSVVIVF…VNWYAPLVAP (112 aa). Substrate is bound by residues Asp247 and Arg277. 2 residues coordinate Mn(2+): Asp301 and His303. The segment at 381-443 is catalytic subdomain B; it reads PYRSPAMAGG…PCSRVGHIYR (63 aa). Substrate is bound at residue Trp412. His440 contributes to the Mn(2+) binding site. Arg443 is a substrate binding site. In terms of domain architecture, Ricin B-type lectin spans 532–652; the sequence is VEWGEIRGLE…GKMTQKWEMN (121 aa).

Belongs to the glycosyltransferase 2 family. GalNAc-T subfamily. The cofactor is Mn(2+). In terms of tissue distribution, highly expressed in sublingual gland. Expressed at lower level in stomach, small intestiine and colon.

It is found in the golgi apparatus membrane. It catalyses the reaction L-seryl-[protein] + UDP-N-acetyl-alpha-D-galactosamine = a 3-O-[N-acetyl-alpha-D-galactosaminyl]-L-seryl-[protein] + UDP + H(+). The catalysed reaction is L-threonyl-[protein] + UDP-N-acetyl-alpha-D-galactosamine = a 3-O-[N-acetyl-alpha-D-galactosaminyl]-L-threonyl-[protein] + UDP + H(+). The protein operates within protein modification; protein glycosylation. In terms of biological role, glycopeptide transferase involved in O-linked oligosaccharide biosynthesis, which catalyzes the transfer of an N-acetyl-D-galactosamine residue to an already glycosylated peptide. In contrast to other proteins of the family, it does not act as a peptide transferase that transfers GalNAc onto serine or threonine residue on the protein receptor, but instead requires the prior addition of a GalNAc on a peptide before adding additional GalNAc moieties. Some peptide transferase activity is however not excluded, considering that its appropriate peptide substrate may remain unidentified. In Rattus norvegicus (Rat), this protein is N-acetylgalactosaminyltransferase 7 (Galnt7).